A 237-amino-acid polypeptide reads, in one-letter code: Eukaryotic translation initiation factor 3 subunit K (237 aa).

In terms of domain architecture, PCI spans 44 to 219; the sequence is CDCNANRALL…EARKAEIRED (176 aa).

Belongs to the eIF-3 subunit K family. In terms of assembly, component of the eukaryotic translation initiation factor 3 (eIF-3) complex.

The protein localises to the cytoplasm. Component of the eukaryotic translation initiation factor 3 (eIF-3) complex, which is involved in protein synthesis of a specialized repertoire of mRNAs and, together with other initiation factors, stimulates binding of mRNA and methionyl-tRNAi to the 40S ribosome. The eIF-3 complex specifically targets and initiates translation of a subset of mRNAs involved in cell proliferation. In Neurospora crassa (strain ATCC 24698 / 74-OR23-1A / CBS 708.71 / DSM 1257 / FGSC 987), this protein is Eukaryotic translation initiation factor 3 subunit K.